The following is a 401-amino-acid chain: Chalcone synthase 2 (401 aa).

Residue Cys168 is part of the active site.

Belongs to the thiolase-like superfamily. Chalcone/stilbene synthases family.

The enzyme catalyses (E)-4-coumaroyl-CoA + 3 malonyl-CoA + 3 H(+) = 2',4,4',6'-tetrahydroxychalcone + 3 CO2 + 4 CoA. It participates in secondary metabolite biosynthesis; flavonoid biosynthesis. In terms of biological role, the primary product of this enzyme is 4,2',4',6'-tetrahydroxychalcone (also termed naringenin-chalcone or chalcone) which can under specific conditions spontaneously isomerize into naringenin. The polypeptide is Chalcone synthase 2 (CHS2) (Sorghum bicolor (Sorghum)).